The chain runs to 202 residues: Sterile alpha motif domain-containing protein 10 (202 aa).

A disordered region spans residues 1 to 22 (MFTELRSKLSPPRARAGAVRPG). Residues 118–184 (WSQQDVCKWL…LQQVLHLQVR (67 aa)) form the SAM domain.

In Mus musculus (Mouse), this protein is Sterile alpha motif domain-containing protein 10.